We begin with the raw amino-acid sequence, 327 residues long: Malate dehydrogenase (327 aa).

Gly-11–Ala-17 contacts NAD(+). Substrate contacts are provided by Arg-92 and Arg-98. NAD(+) contacts are provided by residues Asn-105, Gln-112, and Val-129 to Asn-131. Positions 131 and 162 each coordinate substrate. The Proton acceptor role is filled by His-187.

The protein belongs to the LDH/MDH superfamily. MDH type 2 family.

It carries out the reaction (S)-malate + NAD(+) = oxaloacetate + NADH + H(+). In terms of biological role, catalyzes the reversible oxidation of malate to oxaloacetate. This Nitrosospira multiformis (strain ATCC 25196 / NCIMB 11849 / C 71) protein is Malate dehydrogenase.